A 372-amino-acid chain; its full sequence is Glutamate 5-kinase (372 aa).

Residue Lys14 participates in ATP binding. Ser54, Asp141, and Asn153 together coordinate substrate. 173-174 (TD) is an ATP binding site. The 79-residue stretch at 280–358 (RGHVVIDDGA…GEIESVLGYM (79 aa)) folds into the PUA domain.

This sequence belongs to the glutamate 5-kinase family.

It is found in the cytoplasm. It carries out the reaction L-glutamate + ATP = L-glutamyl 5-phosphate + ADP. It functions in the pathway amino-acid biosynthesis; L-proline biosynthesis; L-glutamate 5-semialdehyde from L-glutamate: step 1/2. In terms of biological role, catalyzes the transfer of a phosphate group to glutamate to form L-glutamate 5-phosphate. In Paraburkholderia phymatum (strain DSM 17167 / CIP 108236 / LMG 21445 / STM815) (Burkholderia phymatum), this protein is Glutamate 5-kinase.